A 1069-amino-acid polypeptide reads, in one-letter code: ISWI chromatin-remodeling complex ATPase CHR17 (1069 aa).

Residues 1 to 10 (MARASKREVS) show a composition bias toward basic and acidic residues. 2 disordered regions span residues 1 to 93 (MARA…KEMQ) and 136 to 168 (FAKSDPSPSQKKGKGRGRHSSKLTEEEEDEECL). Acidic residues-rich tracts occupy residues 15 to 37 (YSSEEEEQVNDQANVEEDDDELE) and 45 to 78 (SDEEDVAPDEAPVSDDEVVPVEDDAEEDEEDEEK). The segment covering 79 to 93 (AEISKREKARLKEMQ) has biased composition (basic and acidic residues). The segment covering 146 to 156 (KKGKGRGRHSS) has biased composition (basic residues). The Helicase ATP-binding domain maps to 206-371 (IRLYENGING…WALLNFLLPE (166 aa)). Residue 219 to 226 (DEMGLGKT) coordinates ATP. A DEAH box motif is present at residues 322–325 (DEAH). The region spanning 499–650 (LLDKLLPKLK…ALVIQQGRLA (152 aa)) is the Helicase C-terminal domain. SANT domains are found at residues 845 to 897 (EGFS…VRYK) and 946 to 1007 (QNKG…DTLI). The tract at residues 1016–1069 (EFDERERQARKEKKLSKSATPSKRPSGRQANESPSSLLKKRKQLSMDDYGKRRK) is disordered. Polar residues predominate over residues 1032 to 1051 (KSATPSKRPSGRQANESPSS). Basic and acidic residues predominate over residues 1059-1069 (LSMDDYGKRRK).

This sequence belongs to the SNF2/RAD54 helicase family. ISWI subfamily. Interacts with RLT1. Binds to FGT1. Highly expressed in growing tissues such as inflorescence and flower meristems, young leaves and floral organs. Expressed in roots, rosette and cauline leaves, stems, flowers, inflorescences and siliques.

The protein localises to the nucleus. Functionally, possesses intrinsic ATP-dependent nucleosome-remodeling activity. Constitutes the catalytic subunit of several complexes capable of forming ordered nucleosome arrays on chromatin. Involved in the formation of nucleosome distribution patterns. Required for the maintenance of the plant vegetative phase. In association with RLT1 or RLT2 may prevent the early activation of the vegetative-to-reproductive transition by regulating key genes that contribute to flower timing, such as FT, SEP1, SEP3, AGL8/FUL, SOC1 and FLC. Necessary to acquire heat stress (HS) memory. In Arabidopsis thaliana (Mouse-ear cress), this protein is ISWI chromatin-remodeling complex ATPase CHR17.